The chain runs to 378 residues: Chaperone protein DnaJ 2 (378 aa).

One can recognise a J domain in the interval 4-68; the sequence is DYYGLLGVSR…EKRRIVDLGG (65 aa). The CR-type zinc-finger motif lies at 128–210; the sequence is GVTKQVTVDT…CVGDGRVRAR (83 aa). Zn(2+) contacts are provided by cysteine 141, cysteine 144, cysteine 158, cysteine 161, cysteine 184, cysteine 187, cysteine 198, and cysteine 201. 4 CXXCXGXG motif repeats span residues 141 to 148, 158 to 165, 184 to 191, and 198 to 205; these read CDRCQGKG, CDTCGGRG, CPTCRGVG, and CCQCVGDG.

The protein belongs to the DnaJ family. In terms of assembly, homodimer. It depends on Zn(2+) as a cofactor.

The protein resides in the cytoplasm. Participates actively in the response to hyperosmotic and heat shock by preventing the aggregation of stress-denatured proteins and by disaggregating proteins, also in an autonomous, DnaK-independent fashion. Unfolded proteins bind initially to DnaJ; upon interaction with the DnaJ-bound protein, DnaK hydrolyzes its bound ATP, resulting in the formation of a stable complex. GrpE releases ADP from DnaK; ATP binding to DnaK triggers the release of the substrate protein, thus completing the reaction cycle. Several rounds of ATP-dependent interactions between DnaJ, DnaK and GrpE are required for fully efficient folding. Also involved, together with DnaK and GrpE, in the DNA replication of plasmids through activation of initiation proteins. The sequence is that of Chaperone protein DnaJ 2 from Mycobacterium leprae (strain TN).